We begin with the raw amino-acid sequence, 230 residues long: uncharacterized protein (230 aa).

The next 7 membrane-spanning stretches (helical) occupy residues 34-54 (FFAG…MNFQ), 56-76 (VVQY…GLMF), 87-107 (MLFA…GMVI), 111-131 (GLGA…LMSV), 146-166 (MLFI…FLGS), 167-187 (PMFQ…YIAY), and 205-225 (VSLY…IGIF).

Belongs to the BI1 family.

It localises to the cell membrane. This is an uncharacterized protein from Helicobacter pylori (strain ATCC 700392 / 26695) (Campylobacter pylori).